A 366-amino-acid chain; its full sequence is Carboxy-cis,cis-muconate cyclase (366 aa).

Catalysis depends on residues H149, R197, E213, and R275.

It belongs to the cycloisomerase 2 family. In terms of assembly, homotetramer.

The catalysed reaction is 3-carboxy-2,5-dihydro-5-oxofuran-2-acetate = 3-carboxy-cis,cis-muconate. It participates in aromatic compound metabolism; beta-ketoadipate pathway; 3-carboxy-cis,cis-muconate from 3-carboxy-2,5-dihydro-5-oxofuran-2-acetate: step 1/1. In terms of biological role, catalyzes a syn cycloisomerization. Also possesses mle activity. The protein is Carboxy-cis,cis-muconate cyclase of Neurospora crassa (strain ATCC 24698 / 74-OR23-1A / CBS 708.71 / DSM 1257 / FGSC 987).